The following is a 206-amino-acid chain: Small ribosomal subunit protein uS4 (206 aa).

Residues 96–156 (GRLDNVVYRM…EKSKKQARIK (61 aa)) form the S4 RNA-binding domain.

Belongs to the universal ribosomal protein uS4 family. Part of the 30S ribosomal subunit. Contacts protein S5. The interaction surface between S4 and S5 is involved in control of translational fidelity.

Functionally, one of the primary rRNA binding proteins, it binds directly to 16S rRNA where it nucleates assembly of the body of the 30S subunit. Its function is as follows. With S5 and S12 plays an important role in translational accuracy. The protein is Small ribosomal subunit protein uS4 of Haemophilus influenzae (strain 86-028NP).